Here is a 505-residue protein sequence, read N- to C-terminus: Probable alpha-L-arabinofuranosidase C (505 aa).

Asn-81, Asn-152, Asn-269, and Asn-438 each carry an N-linked (GlcNAc...) asparagine glycan.

Belongs to the glycosyl hydrolase 51 family.

The protein localises to the secreted. The enzyme catalyses Hydrolysis of terminal non-reducing alpha-L-arabinofuranoside residues in alpha-L-arabinosides.. It functions in the pathway glycan metabolism; L-arabinan degradation. Functionally, alpha-L-arabinofuranosidase involved in the degradation of arabinoxylan, a major component of plant hemicellulose. Acts only on small linear 1,5-alpha-linked L-arabinofuranosyl oligosaccharides. The protein is Probable alpha-L-arabinofuranosidase C (abfC) of Aspergillus fumigatus (strain ATCC MYA-4609 / CBS 101355 / FGSC A1100 / Af293) (Neosartorya fumigata).